The primary structure comprises 341 residues: HTH-type transcriptional repressor PurR (341 aa).

Positions 2 to 56 constitute an HTH lacI-type domain; the sequence is ATIKDVAKRANVSTTTVSHVINKTRFVAEETRNAVWAAIKELHYSPSAVARSLKV. Positions 4 to 23 form a DNA-binding region, H-T-H motif; sequence IKDVAKRANVSTTTVSHVIN. A DNA-binding region spans residues 48–56; the sequence is SAVARSLKV. Hypoxanthine contacts are provided by Tyr-73, Arg-190, Thr-192, Phe-221, and Asp-275.

Homodimer.

The protein operates within purine metabolism; purine nucleotide biosynthesis [regulation]. Is the main repressor of the genes involved in the de novo synthesis of purine nucleotides, regulating purB, purC, purEK, purF, purHD, purL, purMN and guaBA expression. PurR is allosterically activated to bind its cognate DNA by binding the purine corepressors, hypoxanthine or guanine, thereby effecting transcription repression. This chain is HTH-type transcriptional repressor PurR, found in Shigella sonnei (strain Ss046).